The sequence spans 562 residues: MTTTTTVKSDIEIAQEANMKKIQEIAADLNILEDELEPYGHYKGKLSLDIFKRLQNEKDGKVVLVTAINPTPAGEGKSTVTVGLGQAFNKIGKKTVIALREPSLGPTMGLKGGAAGGGFSQVVPMEDINLHFTGDIHAITTANNALAAFIDNHIQQGNTLGIDTRKIVWKRCVDLNDRALRNVVIGLGGPVQGVPREDGFDITVASEIMAVFCLATDIQDLKARLSRIVVAYNFANQPVTVKDLGVEGALTLLLKDALKPNLVQTLENTPAIIHGGPFANIAHGCNSVIATTMAAKLGDYVITEAGFGADLGAEKFLDIKARAAGIKPEAVVIVATIRALKMHGGVAKDQLKEENVDALAKGMENLQKHVETIQSFGVPFVIAINKFITDTDAEVAYLQEWCNERGYAVSLTEVWEKGGQGGVDLAEKVLKEIEKGENNYAPLYELELPLEEKIRTIAQKVYGAKDIEFAPKARKQLAQYEGEGWSNLPICMAKTQYSLSDDATKLGRPSDFIVTIRELKPSIGAGFIVALTGTMLTMPGLPKQPAALQMDVNEDGKAVGLF.

71-78 provides a ligand contact to ATP; that stretch reads TPAGEGKS.

It belongs to the formate--tetrahydrofolate ligase family.

It catalyses the reaction (6S)-5,6,7,8-tetrahydrofolate + formate + ATP = (6R)-10-formyltetrahydrofolate + ADP + phosphate. It functions in the pathway one-carbon metabolism; tetrahydrofolate interconversion. In Bacillus anthracis (strain A0248), this protein is Formate--tetrahydrofolate ligase.